A 110-amino-acid chain; its full sequence is DNA-binding protein Mhun_3016 (110 aa).

It belongs to the PDCD5 family.

The chain is DNA-binding protein Mhun_3016 from Methanospirillum hungatei JF-1 (strain ATCC 27890 / DSM 864 / NBRC 100397 / JF-1).